A 436-amino-acid polypeptide reads, in one-letter code: Trigger factor (436 aa).

The region spanning 161–246 (EDQLNIDFVG…VNSVSEPKLP (86 aa)) is the PPIase FKBP-type domain.

It belongs to the FKBP-type PPIase family. Tig subfamily.

Its subcellular location is the cytoplasm. The catalysed reaction is [protein]-peptidylproline (omega=180) = [protein]-peptidylproline (omega=0). Functionally, involved in protein export. Acts as a chaperone by maintaining the newly synthesized protein in an open conformation. Functions as a peptidyl-prolyl cis-trans isomerase. This is Trigger factor from Pseudomonas fluorescens (strain SBW25).